The sequence spans 694 residues: Elongation factor G 2 (694 aa).

In terms of domain architecture, tr-type G spans 8–282; the sequence is TAIRNIGIMA…AVVSYLPSPL (275 aa). Residues 17-24, 81-85, and 135-138 each bind GTP; these read AHIDAGKT, DTPGH, and NKMD.

It belongs to the TRAFAC class translation factor GTPase superfamily. Classic translation factor GTPase family. EF-G/EF-2 subfamily.

The protein resides in the cytoplasm. Functionally, catalyzes the GTP-dependent ribosomal translocation step during translation elongation. During this step, the ribosome changes from the pre-translocational (PRE) to the post-translocational (POST) state as the newly formed A-site-bound peptidyl-tRNA and P-site-bound deacylated tRNA move to the P and E sites, respectively. Catalyzes the coordinated movement of the two tRNA molecules, the mRNA and conformational changes in the ribosome. This Syntrophomonas wolfei subsp. wolfei (strain DSM 2245B / Goettingen) protein is Elongation factor G 2.